The following is a 121-amino-acid chain: uncharacterized protein (121 aa).

Positions N20–T98 are disordered. Positions K35–N51 are enriched in basic and acidic residues.

This is an uncharacterized protein from Invertebrate iridescent virus 6 (IIV-6).